We begin with the raw amino-acid sequence, 156 residues long: Ribosome maturation factor RimP (156 aa).

It belongs to the RimP family.

It localises to the cytoplasm. Functionally, required for maturation of 30S ribosomal subunits. The polypeptide is Ribosome maturation factor RimP (Bacillus subtilis (strain 168)).